The primary structure comprises 588 residues: Secreted triacylglycerol lipase LIP1 (588 aa).

Residues 1-20 (MRFSGFVSGLGLGLLTAVSA) form the signal peptide. The active-site Acyl-ester intermediate is S258. N400 carries N-linked (GlcNAc...) asparagine glycosylation.

This sequence belongs to the type-B carboxylesterase/lipase family.

Its subcellular location is the secreted. The catalysed reaction is a triacylglycerol + H2O = a diacylglycerol + a fatty acid + H(+). Functionally, secreted acylglycerol lipase required for efficient utilization of saturated triglyceride lipids. Is not involved in virulence. This chain is Secreted triacylglycerol lipase LIP1, found in Gibberella zeae (strain ATCC MYA-4620 / CBS 123657 / FGSC 9075 / NRRL 31084 / PH-1) (Wheat head blight fungus).